We begin with the raw amino-acid sequence, 157 residues long: Beta-defensin 125 (157 aa).

An N-terminal signal peptide occupies residues methionine 1–glycine 20. Cystine bridges form between cysteine 27–cysteine 55, cysteine 35–cysteine 49, and cysteine 39–cysteine 56. The interval glycine 109–asparagine 157 is disordered. A compositionally biased stretch (low complexity) spans glutamate 110–threonine 145.

This sequence belongs to the beta-defensin family.

The protein resides in the secreted. Functionally, has antibacterial activity. This is Beta-defensin 125 (DEFB125) from Gorilla gorilla gorilla (Western lowland gorilla).